The sequence spans 539 residues: Eukaryotic translation initiation factor 3 subunit L (539 aa).

One can recognise a PCI domain in the interval 306–514 (TFSDILLYIQ…IHIADTKVSH (209 aa)).

This sequence belongs to the eIF-3 subunit L family. In terms of assembly, component of the eukaryotic translation initiation factor 3 (eIF-3) complex. The eIF-3 complex interacts with pix.

The protein resides in the cytoplasm. Its function is as follows. Component of the eukaryotic translation initiation factor 3 (eIF-3) complex, which is involved in protein synthesis of a specialized repertoire of mRNAs and, together with other initiation factors, stimulates binding of mRNA and methionyl-tRNAi to the 40S ribosome. The eIF-3 complex specifically targets and initiates translation of a subset of mRNAs involved in cell proliferation. The chain is Eukaryotic translation initiation factor 3 subunit L from Drosophila melanogaster (Fruit fly).